We begin with the raw amino-acid sequence, 458 residues long: MSKQQAPVNKNDVVEVTIEDLTHDGAGVAKVDGYALFIPKALPGERLKAKVVKVKKGYGFGRVLNMIEASPDRVEAPCPVFNQCGGCQLQHMSYDAQLRYKQKQVQDVLERIGKITAVTVRPTIGMNEPWRYRNKAQVPVGEREGGLIAGFYQERSHRIIDMDECMIQHEENDKVIRQVKELARELGIRGYDEEKHRGTLRHVVARYGKNTGEIMVVLITRGEELPHKKTLIERIHKAIPHVKSIVQNVNPKRTNVIFGDKTKVLWGEEYIYDTIGDIKFAISARSFYQVNPEQTKVLYDQALEFANLTGSETVIDAYCGIGTISLFLAQQAKHVYGVEIVPEAISDAKRNARLNGFANVQFAVGDAEKVMPWWYAQGVRADVIVVDPPRKGCDEALLKTILNMKPDRVVYVSCNPATLARDLRVLEDGGYETKDVQPVDMFPWTTHIESVAVLELKN.

Residues 5–65 enclose the TRAM domain; it reads QAPVNKNDVV…KGYGFGRVLN (61 aa). The [4Fe-4S] cluster site is built by Cys78, Cys84, Cys87, and Cys165. S-adenosyl-L-methionine is bound by residues Gln289, Tyr318, Glu339, and Asp387. Cys414 serves as the catalytic Nucleophile.

The protein belongs to the class I-like SAM-binding methyltransferase superfamily. RNA M5U methyltransferase family.

This is an uncharacterized protein from Halalkalibacterium halodurans (strain ATCC BAA-125 / DSM 18197 / FERM 7344 / JCM 9153 / C-125) (Bacillus halodurans).